Here is a 124-residue protein sequence, read N- to C-terminus: Small ribosomal subunit protein uS13 (124 aa).

The disordered stretch occupies residues 99 to 124; that stretch reads RGQRTRTNARTRKGPRKTVGVMRKKS. The span at 101-124 shows a compositional bias: basic residues; the sequence is QRTRTNARTRKGPRKTVGVMRKKS.

Belongs to the universal ribosomal protein uS13 family. Part of the 30S ribosomal subunit. Forms a loose heterodimer with protein S19. Forms two bridges to the 50S subunit in the 70S ribosome.

In terms of biological role, located at the top of the head of the 30S subunit, it contacts several helices of the 16S rRNA. In the 70S ribosome it contacts the 23S rRNA (bridge B1a) and protein L5 of the 50S subunit (bridge B1b), connecting the 2 subunits; these bridges are implicated in subunit movement. Contacts the tRNAs in the A and P-sites. This Caldicellulosiruptor bescii (strain ATCC BAA-1888 / DSM 6725 / KCTC 15123 / Z-1320) (Anaerocellum thermophilum) protein is Small ribosomal subunit protein uS13.